The following is a 203-amino-acid chain: Putative 3-methyladenine DNA glycosylase (203 aa).

The protein belongs to the DNA glycosylase MPG family.

This chain is Putative 3-methyladenine DNA glycosylase, found in Clostridium tetani (strain Massachusetts / E88).